A 222-amino-acid chain; its full sequence is Glutathione S-transferase A1 (222 aa).

Methionine 1 bears the N-acetylmethionine mark. An N-acetylalanine; in Glutathione S-transferase A1, N-terminally processed modification is found at alanine 2. The 81-residue stretch at 3 to 83 (EKPKLHYFNA…YIASKYNLYG (81 aa)) folds into the GST N-terminal domain. Lysine 4 is modified (N6-succinyllysine). Glutathione is bound by residues tyrosine 9, arginine 45, 54–55 (QV), and 67–68 (QT). One can recognise a GST C-terminal domain in the interval 85–207 (DIKERALIDM…LQPGSPRKPP (123 aa)).

The protein belongs to the GST superfamily. Alpha family. In terms of assembly, homodimer or heterodimer of GSTA1 and GSTA2. Liver.

It localises to the cytoplasm. It carries out the reaction RX + glutathione = an S-substituted glutathione + a halide anion + H(+). It catalyses the reaction prostaglandin A2 + glutathione = prostaglandin A2-S-(R)-glutathione. The catalysed reaction is prostaglandin J2 + glutathione = prostaglandin J2-S-(R)-glutathione. The enzyme catalyses (13S)-hydroperoxy-(9Z,11E)-octadecadienoate + 2 glutathione = (13S)-hydroxy-(9Z,11E)-octadecadienoate + glutathione disulfide + H2O. It carries out the reaction androst-5-ene-3,17-dione = androst-4-ene-3,17-dione. Its activity is regulated as follows. The isomerase activity is inhibited by S-methylglutathione (GSMe). Its function is as follows. Glutathione S-transferase that catalyzes the nucleophilic attack of the sulfur atom of glutathione on the electrophilic groups of a wide range of exogenous and endogenous compounds. Involved in the formation of glutathione conjugates of both prostaglandin A2 (PGA2) and prostaglandin J2 (PGJ2). It also catalyzes the isomerization of D5-androstene-3,17-dione (AD) into D4-androstene-3,17-dione and may therefore play an important role in hormone biosynthesis. Through its glutathione-dependent peroxidase activity toward the fatty acid hydroperoxide (13S)-hydroperoxy-(9Z,11E)-octadecadienoate/13-HPODE it is also involved in the metabolism of oxidized linoleic acid. The protein is Glutathione S-transferase A1 (GSTA1) of Homo sapiens (Human).